A 398-amino-acid polypeptide reads, in one-letter code: Phospholipase C (398 aa).

The N-terminal stretch at 1 to 28 (MKRKICKALICAALATSLWAGASTKVYA) is a signal peptide. The Zn(2+) site is built by W29, H39, D84, H96, H154, D158, H164, H176, and E180. The 250-residue stretch at 29 to 278 (WDGKIDGTGT…HDVSEGNDPS (250 aa)) folds into the Zn-dependent PLC domain. A linker region spans residues 275–283 (NDPSVGKNV). The PLAT domain occupies 284–398 (KELVAYISTS…ISGNSTYNIK (115 aa)). Ca(2+) contacts are provided by D297, G299, T300, D301, D321, N322, G324, N325, D326, D364, and A365.

This sequence belongs to the bacterial zinc-metallophospholipase C family. It depends on Ca(2+) as a cofactor. Zn(2+) is required as a cofactor.

The protein localises to the secreted. The catalysed reaction is a 1,2-diacyl-sn-glycero-3-phosphocholine + H2O = phosphocholine + a 1,2-diacyl-sn-glycerol + H(+). Its function is as follows. Bacterial hemolysins are exotoxins that attack blood cell membranes and cause cell rupture. Constitutes an essential virulence factor in gas gangrene. Binds to eukaryotic membranes where it hydrolyzes both phosphatidylcholine and sphingomyelin. The diacylglycerol produced can activate both the arachidonic acid pathway, leading to modulation of the inflammatory response cascade and thrombosis, and protein kinase C, leading to activation of eukaryotic phospholipases and further membrane damage. Acts on human and mouse erythrocytes, but not on rabbit or horse erythrocytes. This chain is Phospholipase C (plc), found in Clostridium perfringens (strain ATCC 13124 / DSM 756 / JCM 1290 / NCIMB 6125 / NCTC 8237 / Type A).